An 898-amino-acid polypeptide reads, in one-letter code: Cilium assembly protein DZIP1 (898 aa).

Residues 14 to 66 (DPPGTHSSAGIPSLLSSPQSQPSSGSQSRPAPSTMSGPLTSSGASTSIPPPFK) form a disordered region. Residues 25–46 (PSLLSSPQSQPSSGSQSRPAPS) are compositionally biased toward low complexity. The segment covering 47–60 (TMSGPLTSSGASTS) has biased composition (polar residues). Residues 145–197 (LSISLQAAEERLLAEAREREQICVQLQKKTQDAKALKEELKQRKKIIASQQAM) adopt a coiled-coil conformation. The C2H2-type zinc finger occupies 207–230 (HKCQHCEKAFMNASFLQSHMQRRH). Coiled-coil stretches lie at residues 242 to 353 (NQKK…VQTQ) and 407 to 447 (SAVS…ISSK). Positions 435-463 (TSQNKQMKQISSKPPTITVQREGVSTPSP) are enriched in polar residues. 3 disordered regions span residues 435–509 (TSQN…SWQK), 585–739 (EQRV…WTDG), and 773–878 (KSLE…DAGT). Low complexity predominate over residues 495–505 (SSISESPTENR). The stretch at 573–590 (YRRALKEISHKLEQRVKE) forms a coiled coil. Residues 605 to 652 (VVQSRPRSSSFPSTVTRVMSGPASKQQRTPQPVPRSRTNVPHKTSTPL) are compositionally biased toward polar residues. Over residues 662–684 (SDEDSSEEEEEEEEEEESSDEES) the composition is skewed to acidic residues. Polar residues-rich tracts occupy residues 685–715 (PQMQKKTVLVNSSTAKAQNTAKTQSTAQSVR) and 723–734 (AEPTNVTTLSDS). The span at 797–815 (KPTDVRNTRQNAKKELKYS) shows a compositional bias: basic and acidic residues. Acidic residues predominate over residues 816–826 (DDDDDDDDDWD). Polar residues predominate over residues 855–866 (DTSTSVWGSSTG).

Belongs to the DZIP C2H2-type zinc-finger protein family. In terms of tissue distribution, expressed throughout the embryo starting at 12 hours.

Its subcellular location is the cell projection. It localises to the cilium. The protein localises to the cytoplasm. The protein resides in the cytoskeleton. It is found in the cilium basal body. Its subcellular location is the microtubule organizing center. It localises to the centrosome. The protein localises to the centriole. The protein resides in the nucleus. Functionally, molecular adapter that recruits protein complexes required for cilium assembly and function to the cilium basal body. Required for establishment of left-right asymmetry during embryogenesis. Acts as a permissive factor that is required for the proper regulation of Hedgehog (Hh) target genes in response to Hh signals. Acts downstream of the Smoothened protein to modulate Gli activity in the somites of the developing embryo. This chain is Cilium assembly protein DZIP1 (dzip1), found in Danio rerio (Zebrafish).